The sequence spans 405 residues: Acetate kinase (405 aa).

Asn7 serves as a coordination point for Mg(2+). Residue Lys14 coordinates ATP. Arg90 contributes to the substrate binding site. Catalysis depends on Asp147, which acts as the Proton donor/acceptor. Residues 207–211, 282–284, and 330–334 contribute to the ATP site; these read HLGNG, DMR, and GVGEN. Glu383 lines the Mg(2+) pocket.

This sequence belongs to the acetokinase family. In terms of assembly, homodimer. Requires Mg(2+) as cofactor. Mn(2+) serves as cofactor.

It localises to the cytoplasm. The enzyme catalyses acetate + ATP = acetyl phosphate + ADP. It participates in metabolic intermediate biosynthesis; acetyl-CoA biosynthesis; acetyl-CoA from acetate: step 1/2. Its function is as follows. Catalyzes the formation of acetyl phosphate from acetate and ATP. Can also catalyze the reverse reaction. This chain is Acetate kinase, found in Pseudothermotoga lettingae (strain ATCC BAA-301 / DSM 14385 / NBRC 107922 / TMO) (Thermotoga lettingae).